The chain runs to 1632 residues: Guanine exchange factor for Rac 30 (1632 aa).

The Calponin-homology (CH) domain occupies 16–122; the sequence is NIQIDSFTSW…VIFLLIQKIK (107 aa). Disordered stretches follow at residues 134–155 and 171–285; these read QGETTGTTTTITSTNTTTTPTK and FSHI…PTTG. 2 stretches are compositionally biased toward low complexity: residues 137–154 and 180–284; these read TTGTTTTITSTNTTTTPT and QSSS…SPTT. IQ domains lie at 388-417 and 432-461; these read DLKKIIFMQSVIRGYLVRSKWRNVLEKYKQ and AYRGLIRVQAIVKGKIQRKKLFKMFPLYRR. Residues 460 to 638 form the DH domain; sequence RRNEIVKEIL…KDVAEYVNEK (179 aa). Over residues 775 to 795 the composition is skewed to low complexity; the sequence is QINNQNNNQNNNQNNNLNNNN. Positions 775–798 are disordered; sequence QINNQNNNQNNNQNNNLNNNNDDS. The region spanning 940-1038 is the PH 1 domain; that stretch reads DSEFSNVLEK…WISLIRLSIK (99 aa). Positions 1138–1156 are enriched in low complexity; that stretch reads STSASQSQSQSPSPSPSHS. Residues 1138–1161 are disordered; the sequence is STSASQSQSQSPSPSPSHSINQKQ. An Arf-GAP domain is found at 1271–1389; that stretch reads NSCGDNINND…NNNNNNSQNG (119 aa). The segment at 1286–1309 adopts a C4-type zinc-finger fold; the sequence is CAECGASDPSWVSINYGVVVCLDC. 3 stretches are compositionally biased toward low complexity: residues 1380-1402, 1409-1431, and 1441-1481; these read NNNNNNSQNGDSTTPTPTPTSTT, STPTSPNLNSQSSPPPTATTTQT, and SSPT…TTPT. The tract at residues 1380–1521 is disordered; the sequence is NNNNNNSQNG…SSHAITERKT (142 aa). Over residues 1500-1515 the composition is skewed to polar residues; it reads DTSNGKGTWSRGSSHA. A PH 2 domain is found at 1532-1631; that stretch reads KKEHQGYLFK…WLDVLSSHTT (100 aa).

It localises to the membrane. The protein localises to the cytoplasmic vesicle. The protein resides in the phagosome membrane. Functionally, GTPase-activating protein for Rac involved in streaming and development. The polypeptide is Guanine exchange factor for Rac 30 (gxcDD) (Dictyostelium discoideum (Social amoeba)).